The following is a 391-amino-acid chain: Homocysteine-responsive endoplasmic reticulum-resident ubiquitin-like domain member 1 protein (391 aa).

An N-acetylmethionine modification is found at M1. Over 1 to 263 (MESETEPEPV…VEEDDEINRD (263 aa)) the chain is Cytoplasmic. A Ubiquitin-like domain is found at 10–72 (VTLLVKSPNQ…LLDHQCLRDL (63 aa)). Positions 100–126 (KVAESTEEPAGSNRGQYPEDSSSDGLR) are disordered. Residues 112–124 (NRGQYPEDSSSDG) are compositionally biased toward polar residues. An interaction with UBQLN1 region spans residues 115-200 (QYPEDSSSDG…ASGAFVPPPS (86 aa)). S135 bears the Phosphoserine mark. An interaction with SYVN1 region spans residues 170–190 (LSWFQQIYARQYYMQYLAATA). Residues 264–284 (WLDWTYSAATFSVFLSILYFY) form a helical membrane-spanning segment. Residues 285–289 (SSLSR) lie on the Lumenal side of the membrane. The helical transmembrane segment at 290 to 310 (FLMVMGATVVMYLHHVGWFPF) threads the bilayer. At 311–391 (RPRPVQNFPN…LPEGPPAIAN (81 aa)) the chain is on the cytoplasmic side. The tract at residues 318-359 (FPNDGPPPDVVNQDPNNNLQEGTDPETEDPNHLPPDRDVLDG) is disordered. Positions 346-357 (DPNHLPPDRDVL) are enriched in basic and acidic residues.

As to quaternary structure, interacts with PSEN1 and PSEN2. Interacts with UBXN6. Interacts with UBQLN1, UBQLN2 and UBQLN4. Component of the HRD1 complex, which comprises at least SYNV1/HRD1, FAM8A1, HERPUD1/HERP, OS9, SEL1L and UBE2J1. FAM8A1 binding to SYNV1 may promote recruitment of HERPUD1 to the HRD1 complex. As to expression, widely expressed; in the brain, expression seems to be restricted to neurons and vascular smooth muscle cells. Present in activated microglia in senile plaques in the brain of patients with Alzheimer disease.

Its subcellular location is the endoplasmic reticulum membrane. Component of the endoplasmic reticulum quality control (ERQC) system also called ER-associated degradation (ERAD) involved in ubiquitin-dependent degradation of misfolded endoplasmic reticulum proteins. Could enhance presenilin-mediated amyloid-beta protein 40 generation. Binds to ubiquilins and this interaction is required for efficient degradation of CD3D via the ERAD pathway. This is Homocysteine-responsive endoplasmic reticulum-resident ubiquitin-like domain member 1 protein (HERPUD1) from Homo sapiens (Human).